An 849-amino-acid polypeptide reads, in one-letter code: Pre-mRNA-processing ATP-dependent RNA helicase PRP5 (849 aa).

Residues 13–81 (ESLLEERRKK…RKRKNEFRKS (69 aa)) are a coiled coil. The disordered stretch occupies residues 28–138 (QKKAQFDAQK…PEHDNEKDPL (111 aa)). The segment covering 38-54 (ENQTSRNDIVTNSLEGK) has biased composition (polar residues). Residues 55–85 (QTTEKFTERQERVKEELRKRKNEFRKSDEPV) are compositionally biased toward basic and acidic residues. A compositionally biased stretch (basic residues) spans 89–102 (PSKKKSKRSKVKKK). Residues 120-138 (RSKEHIQKVPEHDNEKDPL) show a composition bias toward basic and acidic residues. Residues 255–284 (TKWSQLGLSTDTMVLITEKLHFGSLTPIQS) carry the Q motif motif. The region spanning 287 to 467 (LPAIMSGRDV…VRVLHSPISI (181 aa)) is the Helicase ATP-binding domain. 300–307 (SKTGSGKT) lines the ATP pocket. A DEAD box motif is present at residues 415-418 (DEAD). Residues 502-661 (ERSEFFDEVQ…LDPLQAKELQ (160 aa)) form the Helicase C-terminal domain. A compositionally biased stretch (basic and acidic residues) spans 689–728 (NIKSKREEAQNKDLELKKNDKRSDDLEKKINNPHEGHDSE). The segment at 689 to 731 (NIKSKREEAQNKDLELKKNDKRSDDLEKKINNPHEGHDSEPES) is disordered.

This sequence belongs to the DEAD box helicase family. DDX46/PRP5 subfamily. As to quaternary structure, interacts with the U2 snRNP and HSH155.

It is found in the nucleus. It carries out the reaction ATP + H2O = ADP + phosphate + H(+). Its function is as follows. ATP-dependent RNA helicase involved spliceosome assembly and in nuclear splicing. Catalyzes an ATP-dependent conformational change of U2 snRNP. Bridges U1 and U2 snRNPs and enables stable U2 snRNP association with intron RNA. This chain is Pre-mRNA-processing ATP-dependent RNA helicase PRP5 (PRP5), found in Saccharomyces cerevisiae (strain YJM789) (Baker's yeast).